The following is a 323-amino-acid chain: Arginase (323 aa).

Mn(2+) is bound by residues H119, D142, H144, and D146. Substrate-binding positions include 144–148 (HADIN), 155–157 (SKN), and D198. Mn(2+) contacts are provided by D247 and D249. Substrate contacts are provided by T261 and E292.

Belongs to the arginase family. Homotrimer. Mn(2+) is required as a cofactor.

The catalysed reaction is L-arginine + H2O = urea + L-ornithine. It functions in the pathway nitrogen metabolism; urea cycle; L-ornithine and urea from L-arginine: step 1/1. The chain is Arginase (aru1) from Schizosaccharomyces pombe (strain 972 / ATCC 24843) (Fission yeast).